Reading from the N-terminus, the 354-residue chain is Serine/threonine-protein kinase ppk34 (354 aa).

The region spanning 40 to 331 is the Protein kinase domain; the sequence is YRLKNMLGYG…IEELLRDPFL (292 aa). ATP contacts are provided by residues 46–54 and K69; that span reads LGYGACSTV. Catalysis depends on D200, which acts as the Proton acceptor.

The protein belongs to the protein kinase superfamily. Ser/Thr protein kinase family.

Its subcellular location is the cytoplasm. It localises to the nucleus. The enzyme catalyses L-seryl-[protein] + ATP = O-phospho-L-seryl-[protein] + ADP + H(+). It carries out the reaction L-threonyl-[protein] + ATP = O-phospho-L-threonyl-[protein] + ADP + H(+). This is Serine/threonine-protein kinase ppk34 (ppk34) from Schizosaccharomyces pombe (strain 972 / ATCC 24843) (Fission yeast).